The following is a 1089-amino-acid chain: SUMO-specific isopeptidase USPL1 (1089 aa).

The tract at residues 90–128 (LISPDSEDCPTPSKPQKRKRLETNCRNSPLPVHSKKTRS) is disordered. The USP domain occupies 215–488 (VQWKNTQALC…ETHIVIWERK (274 aa)). The active-site Nucleophile is cysteine 224. Residues 224 to 483 (CWLDCILSAL…EVPASETHIV (260 aa)) form an SUMO-binding region. Residue histidine 444 is the Proton acceptor of the active site. 4 disordered regions span residues 687-739 (DSQT…KEDQ), 791-817 (ISRRSKRMSRKAKHMEELSPRNSSPPL), 835-868 (LREQEGSRPAPLRHRSPGNESAISPASRGDAAED), and 891-928 (LISSPHREPSLSDHSEPASHCGTPASDQSEPVSHCGSP). Residues 719-733 (TASSKTVAARSAQNQ) are compositionally biased toward polar residues. Over residues 791–803 (ISRRSKRMSRKAK) the composition is skewed to basic residues. Serine 894 bears the Phosphoserine mark. A compositionally biased stretch (basic and acidic residues) spans 895-907 (PHREPSLSDHSEP).

It belongs to the peptidase C19 family. As to quaternary structure, interacts with ELL.

It is found in the nucleus. Its subcellular location is the cajal body. Its function is as follows. SUMO-specific isopeptidase involved in protein desumoylation. Specifically binds SUMO proteins with a higher affinity for SUMO2 and SUMO3 which it cleaves more efficiently. Also able to process full-length SUMO proteins to their mature forms. Plays a key role in RNA polymerase-II-mediated snRNA transcription in the Cajal bodies. Is a component of complexes that can bind to U snRNA genes. In Mus musculus (Mouse), this protein is SUMO-specific isopeptidase USPL1 (Uspl1).